A 92-amino-acid chain; its full sequence is DNA-directed RNA polymerase subunit omega (92 aa).

This sequence belongs to the RNA polymerase subunit omega family. In terms of assembly, the RNAP catalytic core consists of 2 alpha, 1 beta, 1 beta' and 1 omega subunit. When a sigma factor is associated with the core the holoenzyme is formed, which can initiate transcription.

It carries out the reaction RNA(n) + a ribonucleoside 5'-triphosphate = RNA(n+1) + diphosphate. In terms of biological role, promotes RNA polymerase assembly. Latches the N- and C-terminal regions of the beta' subunit thereby facilitating its interaction with the beta and alpha subunits. In Shewanella amazonensis (strain ATCC BAA-1098 / SB2B), this protein is DNA-directed RNA polymerase subunit omega.